The sequence spans 309 residues: Carboxylesterase Culp6 homolog (309 aa).

A helical transmembrane segment spans residues 5 to 25 (ITVIAVLIVLALIGVGIVQYV). C55 and C146 are oxidised to a cystine. Residues S157, D253, and H279 contribute to the active site. C249 and C256 form a disulfide bridge.

It belongs to the cutinase family.

The protein localises to the cell membrane. The catalysed reaction is a butanoate ester + H2O = an aliphatic alcohol + butanoate + H(+). Its activity is regulated as follows. Inhibited by tetrahydrolipstatin (THL), a specific lipase inhibitor. Functionally, esterase that may be involved in cell wall biosynthesis and/or maintenance. Hydrolyzes pNP-butyrate (C4). The chain is Carboxylesterase Culp6 homolog from Corynebacterium glutamicum (strain ATCC 13032 / DSM 20300 / JCM 1318 / BCRC 11384 / CCUG 27702 / LMG 3730 / NBRC 12168 / NCIMB 10025 / NRRL B-2784 / 534).